The following is a 133-amino-acid chain: Putative esterase TV1331 (133 aa).

It belongs to the thioesterase PaaI family.

The polypeptide is Putative esterase TV1331 (Thermoplasma volcanium (strain ATCC 51530 / DSM 4299 / JCM 9571 / NBRC 15438 / GSS1)).